Consider the following 258-residue polypeptide: Type III pantothenate kinase (258 aa).

6-13 (DVGNTNTV) provides a ligand contact to ATP. Substrate contacts are provided by residues Tyr100 and 107-110 (GADR). Residue Asp109 is the Proton acceptor of the active site. Position 129 (Asp129) interacts with K(+). Residue Thr132 coordinates ATP. Thr184 lines the substrate pocket.

It belongs to the type III pantothenate kinase family. As to quaternary structure, homodimer. Requires NH4(+) as cofactor. K(+) is required as a cofactor.

The protein localises to the cytoplasm. The catalysed reaction is (R)-pantothenate + ATP = (R)-4'-phosphopantothenate + ADP + H(+). It participates in cofactor biosynthesis; coenzyme A biosynthesis; CoA from (R)-pantothenate: step 1/5. Its function is as follows. Catalyzes the phosphorylation of pantothenate (Pan), the first step in CoA biosynthesis. The protein is Type III pantothenate kinase of Bacillus velezensis (strain DSM 23117 / BGSC 10A6 / LMG 26770 / FZB42) (Bacillus amyloliquefaciens subsp. plantarum).